The primary structure comprises 146 residues: Histone H2A.1 (146 aa).

Residues 118-146 form a disordered region; it reads SPAAAEKEAKSPKKKTSTKSPKKKVAAKE. 2 consecutive short sequence motifs (SPKK motif) follow at residues 128–131 and 137–140; these read SPKK. Positions 129 to 146 are enriched in basic residues; sequence PKKKTSTKSPKKKVAAKE.

Belongs to the histone H2A family. The nucleosome is a histone octamer containing two molecules each of H2A, H2B, H3 and H4 assembled in one H3-H4 heterotetramer and two H2A-H2B heterodimers. The octamer wraps approximately 147 bp of DNA. Post-translationally, phosphorylated within its C-terminal part, probably at the SPKK motifs. As to expression, expressed preferentially in meristematic tissues of young seedlings, in stigma and ovary but not in pollen.

It localises to the nucleus. The protein resides in the chromosome. In terms of biological role, core component of nucleosome. Nucleosomes wrap and compact DNA into chromatin, limiting DNA accessibility to the cellular machineries which require DNA as a template. Histones thereby play a central role in transcription regulation, DNA repair, DNA replication and chromosomal stability. DNA accessibility is regulated via a complex set of post-translational modifications of histones, also called histone code, and nucleosome remodeling. The polypeptide is Histone H2A.1 (H2A-9) (Triticum aestivum (Wheat)).